Here is a 190-residue protein sequence, read N- to C-terminus: Translation initiation factor IF-3 (190 aa).

The disordered stretch occupies residues 159 to 190 (QSEVQQKPKREGRNMIMFLSPRKSPLIKKDNE).

The protein belongs to the IF-3 family. As to quaternary structure, monomer.

Its subcellular location is the cytoplasm. Its function is as follows. IF-3 binds to the 30S ribosomal subunit and shifts the equilibrium between 70S ribosomes and their 50S and 30S subunits in favor of the free subunits, thus enhancing the availability of 30S subunits on which protein synthesis initiation begins. In Prochlorococcus marinus (strain MIT 9215), this protein is Translation initiation factor IF-3.